The chain runs to 125 residues: Large ribosomal subunit protein bL12 (125 aa).

The protein belongs to the bacterial ribosomal protein bL12 family. As to quaternary structure, homodimer. Part of the ribosomal stalk of the 50S ribosomal subunit. Forms a multimeric L10(L12)X complex, where L10 forms an elongated spine to which 2 to 4 L12 dimers bind in a sequential fashion. Binds GTP-bound translation factors.

In terms of biological role, forms part of the ribosomal stalk which helps the ribosome interact with GTP-bound translation factors. Is thus essential for accurate translation. The protein is Large ribosomal subunit protein bL12 of Chlorobium phaeobacteroides (strain DSM 266 / SMG 266 / 2430).